A 211-amino-acid polypeptide reads, in one-letter code: Proteasome subunit beta (211 aa).

Positions 1–9 (MSEAETLKG) are cleaved as a propeptide — removed in mature form; by autocatalysis. The active-site Nucleophile is threonine 10.

Belongs to the peptidase T1B family. The 20S proteasome core is composed of 14 alpha and 14 beta subunits that assemble into four stacked heptameric rings, resulting in a barrel-shaped structure. The two inner rings, each composed of seven catalytic beta subunits, are sandwiched by two outer rings, each composed of seven alpha subunits. The catalytic chamber with the active sites is on the inside of the barrel. Has a gated structure, the ends of the cylinder being occluded by the N-termini of the alpha-subunits. Is capped at one or both ends by the proteasome regulatory ATPase, PAN.

Its subcellular location is the cytoplasm. The enzyme catalyses Cleavage of peptide bonds with very broad specificity.. The formation of the proteasomal ATPase PAN-20S proteasome complex, via the docking of the C-termini of PAN into the intersubunit pockets in the alpha-rings, triggers opening of the gate for substrate entry. Interconversion between the open-gate and close-gate conformations leads to a dynamic regulation of the 20S proteasome proteolysis activity. Its function is as follows. Component of the proteasome core, a large protease complex with broad specificity involved in protein degradation. The sequence is that of Proteasome subunit beta from Methanosphaerula palustris (strain ATCC BAA-1556 / DSM 19958 / E1-9c).